The sequence spans 406 residues: Exo-alpha-sialidase (406 aa).

Residues 1 to 20 (MQSMRFMILALLVQFLPAWA) form the signal peptide. Substrate-binding residues include Arg-59, Arg-78, Asp-84, and Gln-148. N-linked (GlcNAc...) asparagine glycosylation occurs at Asn-235. Residues Arg-265, Arg-322, 322–323 (RR), 331–332 (YD), Lys-337, Tyr-358, Asp-376, and 376–378 (DFF) contribute to the substrate site. Asn-396 carries an N-linked (GlcNAc...) asparagine glycan.

This sequence belongs to the glycosyl hydrolase 33 family.

The enzyme catalyses Hydrolysis of alpha-(2-&gt;3)-, alpha-(2-&gt;6)-, alpha-(2-&gt;8)- glycosidic linkages of terminal sialic acid residues in oligosaccharides, glycoproteins, glycolipids, colominic acid and synthetic substrates.. Its function is as follows. Sialidase is able to release sialic acid from a wide variety of natural substrates including bovine salivary mucin, colominic acid, bovine fetuin, a serum glycoprotein containing both alpha-2-6 and alpha-2-3-linkages in a ratio of about 3:2, and glycoproteins and glycolipids from thermally denatured human lung epithelial cells. Does not show any trans-sialidase activity since it is able to remove terminal sialic acid residues but is unable to catalyze their transfer to the acceptor substrate. 2-keto-3-deoxynononic acid (KDN) is the preferred substrate and A.fumigatus can utilize KDN as a sole carbon source. The chain is Exo-alpha-sialidase from Aspergillus fumigatus (strain ATCC MYA-4609 / CBS 101355 / FGSC A1100 / Af293) (Neosartorya fumigata).